The primary structure comprises 81 residues: Consomatin Le1 (81 aa).

The signal sequence occupies residues 1-22 (MQTAYWVMVMMMVWITAPLSEG). The propeptide occupies 23-57 (GKPNDVIRGLVPDDLTPQLILRSLISRRRSDKDVR). A 4-carboxyglutamate modification is found at E58. C62 and C67 are joined by a disulfide. W64 is modified (D-tryptophan). The residue at position 69 (P69) is a 4-hydroxyproline. A propeptide spanning residues 71 to 81 (LWRRHDLKGKD) is cleaved from the precursor.

This sequence belongs to the conotoxin C superfamily. Consomatin family. Expressed by the venom duct.

The protein resides in the secreted. In terms of biological role, moderately activates human somatostatin receptors (SSTR) with a preferential activation of SSTR1 and SSTR4. In vivo, does not cause behavioral changes in mice within a few minutes of intracranial injection, but causes a progressive loss of movement thereafter. Four to five hours after injection, mice recover, even with the highest dose tested. Shows antinociception and antihyperalgesia activities in two mouse models of acute pain, most probably by acting outside the central nervous system. The sequence is that of Consomatin Le1 from Conus lenavati (Cone snail).